The following is a 454-amino-acid chain: Putative serine/threonine-protein phosphatase C27B7.6 (454 aa).

Residues D65, H67, D93, and N125 each coordinate Mn(2+). H126 serves as the catalytic Proton donor. Mn(2+) is bound by residues H174 and H252. The segment at 414-454 (RKKLGMTTSTTPPPPRTPSPDAPLAQSPPIPRSPPSSTENA) is disordered. A compositionally biased stretch (pro residues) spans 424–447 (TPPPPRTPSPDAPLAQSPPIPRSP).

The protein belongs to the PPP phosphatase family. PP-1 subfamily. The cofactor is Mn(2+).

It carries out the reaction O-phospho-L-seryl-[protein] + H2O = L-seryl-[protein] + phosphate. It catalyses the reaction O-phospho-L-threonyl-[protein] + H2O = L-threonyl-[protein] + phosphate. This is Putative serine/threonine-protein phosphatase C27B7.6 from Caenorhabditis elegans.